Reading from the N-terminus, the 140-residue chain is L-fucose mutarotase (140 aa).

Histidine 22 acts as the Proton donor in catalysis. Residues aspartate 30, arginine 107, and 129–131 (YGN) each bind substrate.

Belongs to the RbsD / FucU family. FucU mutarotase subfamily. In terms of assembly, homodecamer.

It is found in the cytoplasm. It carries out the reaction alpha-L-fucose = beta-L-fucose. It participates in carbohydrate metabolism; L-fucose metabolism. In terms of biological role, involved in the anomeric conversion of L-fucose. In Shigella boydii serotype 18 (strain CDC 3083-94 / BS512), this protein is L-fucose mutarotase.